The primary structure comprises 667 residues: E3 ubiquitin-protein ligase Midline-1 (667 aa).

The segment at cysteine 10 to arginine 60 adopts an RING-type zinc-finger fold. Serine 92 and serine 96 each carry phosphoserine. 2 B box-type zinc fingers span residues lysine 116–isoleucine 165 and glycine 172–leucine 212. The Zn(2+) site is built by cysteine 119, cysteine 122, cysteine 134, cysteine 137, cysteine 142, cysteine 145, histidine 150, histidine 159, cysteine 175, histidine 178, cysteine 198, and histidine 204. A coiled-coil region spans residues arginine 205–glutamate 264. A COS domain is found at leucine 320–leucine 379. Residues alanine 381 to glutamine 484 form the Fibronectin type-III domain. Polar residues predominate over residues serine 471–proline 485. Residues serine 471–serine 524 are disordered. One can recognise a B30.2/SPRY domain in the interval asparagine 482–histidine 659. Residues valine 499–glutamate 520 show a composition bias toward basic and acidic residues. At serine 511 the chain carries Phosphoserine.

This sequence belongs to the TRIM/RBCC family. Homodimer or heterodimer with MID2. Interacts with IGBP1.

The protein resides in the cytoplasm. The protein localises to the cytoskeleton. The catalysed reaction is S-ubiquitinyl-[E2 ubiquitin-conjugating enzyme]-L-cysteine + [acceptor protein]-L-lysine = [E2 ubiquitin-conjugating enzyme]-L-cysteine + N(6)-ubiquitinyl-[acceptor protein]-L-lysine.. Its function is as follows. Has E3 ubiquitin ligase activity towards IGBP1, promoting its monoubiquitination, which results in deprotection of the catalytic subunit of protein phosphatase PP2A, and its subsequent degradation by polyubiquitination. In Rattus norvegicus (Rat), this protein is E3 ubiquitin-protein ligase Midline-1 (Mid1).